A 1384-amino-acid polypeptide reads, in one-letter code: MMHLRLFCILLAAVSGAEGWGYYGCDEELVGPLYARSLGASSYYSLLTAPRFARLHGISGWSPRIGDPNPWLQIDLMKKHRIRAVATQGSFNSWDWVTRYMLLYGDRVDSWTPFYQRGHNSTFFGNVNESAVVRHDLHFHFTARYIRIVPLAWNPRGKIGLRLGLYGCPYKADILYFDGDDAISYRFPRGVSRSLWDVFAFSFKTEEKDGLLLHAEGAQGDYVTLELEGAHLLLHMSLGSSPIQPRPGHTTVSAGGVLNDQHWHYVRVDRFGRDVNFTLDGYVQRFILNGDFERLNLDTEMFIGGLVGAARKNLAYRHNFRGCIENVIFNRVNIADLAVRRHSRITFEGKVAFRCLDPVPHPINFGGPHNFVQVPGFPRRGRLAVSFRFRTWDLTGLLLFSRLGDGLGHVELTLSEGQVNVSIAQSGRKKLQFAAGYRLNDGFWHEVNFVAQENHAVISIDDVEGAEVRVSYPLLIRTGTSYFFGGCPKPASRWDCHSNQTAFHGCMELLKVDGQLVNLTLVEGRRLGFYAEVLFDTCGITDRCSPNMCEHDGRCYQSWDDFICYCELTGYKGETCHTPLYKESCEAYRLSGKTSGNFTIDPDGSGPLKPFVVYCDIRENRAWTVVRHDRLWTTRVTGSSMERPFLGAIQYWNASWEEVSALANASQHCEQWIEFSCYNSRLLNTAGGYPYSFWIGRNEEQHFYWGGSQPGIQRCACGLDRSCVDPALYCNCDADQPQWRTDKGLLTFVDHLPVTQVVIGDTNRSTSEAQFFLRPLRCYGDRNSWNTISFHTGAALRFPPIRANHSLDVSFYFRTSAPSGVFLENMGGPYCQWRRPYVRVELNTSRDVVFAFDVGNGDENLTVHSDDFEFNDDEWHLVRAEINVKQARLRVDHRPWVLRPMPLQTYIWMEYDQPLYVGSAELKRRPFVGCLRAMRLNGVTLNLEGRANASEGTSPNCTGHCAHPRLPCFHGGRCVERYSYYTCDCDLTAFDGPYCNHDIGGFFEPGTWMRYNLQSALRSAAREFSHMLSRPVPGYEPGYIPGYDTPGYVPGYHGPGYRLPDYPRPGRPVPGYRGPVYNVTGEEVSFSFSTSSAPAVLLYVSSFVRDYMAVLIKDDGTLQLRYQLGTSPYVYQLTTRPVTDGQPHSINITRVYRNLFIQVDYFPLTEQKFSLLVDSQLDSPKALYLGRVMETGVIDPEIQRYNTPGFSGCLSGVRFNNVAPLKTHFRTPRPMTAELAEALRVQGELSESNCGAMPRLVSEVPPELDPWYLPPDFPYYHDEGWVAILLGFLVAFLLLGLVGMLVLFYLQNHRYKGSYHTNEPKAAHEYHPGSKPPLPTSGPAQVPTPTAAPNQAPASAPAPAPTPAPAPGPRDQNLPQILEESRSE.

The N-terminal stretch at 1–19 (MMHLRLFCILLAAVSGAEG) is a signal peptide. The Extracellular portion of the chain corresponds to 20 to 1283 (WGYYGCDEEL…PYYHDEGWVA (1264 aa)). An F5/8 type C domain is found at 25 to 168 (CDEELVGPLY…IGLRLGLYGC (144 aa)). C25 and C168 are disulfide-bonded. N-linked (GlcNAc...) asparagine glycans are attached at residues N120, N128, and N276. Laminin G-like domains are found at residues 203 to 355 (FKTE…AFRC) and 389 to 538 (FRTW…FDTC). Residues C323 and C355 are joined by a disulfide bond. N-linked (GlcNAc...) asparagine glycosylation is found at N420, N499, and N518. Cystine bridges form between C506/C538, C544/C555, C549/C564, and C566/C576. An EGF-like 1 domain is found at 540-577 (ITDRCSPNMCEHDGRCYQSWDDFICYCELTGYKGETCH). One can recognise a Fibrinogen C-terminal domain in the interval 576 to 795 (CHTPLYKESC…NTISFHTGAA (220 aa)). N597, N653, N664, N763, N804, N843, N860, N948, and N956 each carry an N-linked (GlcNAc...) asparagine glycan. The region spanning 813 to 956 (FRTSAPSGVF…ANASEGTSPN (144 aa)) is the Laminin G-like 3 domain. Intrachain disulfides connect C930–C957, C961–C974, C968–C983, and C985–C995. Positions 957–996 (CTGHCAHPRLPCFHGGRCVERYSYYTCDCDLTAFDGPYCN) constitute an EGF-like 2 domain. N-linked (GlcNAc...) asparagine glycosylation is found at N1078 and N1147. Positions 1088–1250 (FSTSSAPAVL…VQGELSESNC (163 aa)) constitute a Laminin G-like 4 domain. Cysteines 1209 and 1250 form a disulfide. The helical transmembrane segment at 1284 to 1304 (ILLGFLVAFLLLGLVGMLVLF) threads the bilayer. The Cytoplasmic segment spans residues 1305–1384 (YLQNHRYKGS…PQILEESRSE (80 aa)). Residues 1319–1328 (EPKAAHEYHP) are compositionally biased toward basic and acidic residues. The tract at residues 1319–1384 (EPKAAHEYHP…PQILEESRSE (66 aa)) is disordered. Residues 1328–1369 (PGSKPPLPTSGPAQVPTPTAAPNQAPASAPAPAPTPAPAPGP) carry the SH3-binding motif. The segment covering 1339-1355 (PAQVPTPTAAPNQAPAS) has biased composition (low complexity). The segment covering 1356–1368 (APAPAPTPAPAPG) has biased composition (pro residues). S1383 is subject to Phosphoserine.

Belongs to the neurexin family. As to quaternary structure, interacts with CNTN1/contactin in cis form. Predominantly expressed in brain. Weak expression detected in ovary, pancreas, colon, lung, heart, intestine and testis.

It is found in the membrane. It localises to the cell junction. The protein resides in the paranodal septate junction. Its function is as follows. Required, with CNTNAP2, for radial and longitudinal organization of myelinated axons. Plays a role in the formation of functional distinct domains critical for saltatory conduction of nerve impulses in myelinated nerve fibers. Demarcates the paranodal region of the axo-glial junction. In association with contactin involved in the signaling between axons and myelinating glial cells. In Homo sapiens (Human), this protein is Contactin-associated protein 1 (CNTNAP1).